We begin with the raw amino-acid sequence, 217 residues long: Thiopurine S-methyltransferase (217 aa).

Positions 10, 45, 66, and 123 each coordinate S-adenosyl-L-methionine.

This sequence belongs to the class I-like SAM-binding methyltransferase superfamily. TPMT family.

The protein localises to the cytoplasm. The enzyme catalyses S-adenosyl-L-methionine + a thiopurine = S-adenosyl-L-homocysteine + a thiopurine S-methylether.. The protein is Thiopurine S-methyltransferase of Pseudomonas fluorescens (strain Pf0-1).